The chain runs to 265 residues: ClpXP adapter protein SpxH (265 aa).

It belongs to the SpxH family. In terms of assembly, interacts with Spx.

The protein localises to the cytoplasm. Its function is as follows. Adapter protein required for efficient degradation of Spx by ClpXP under non-stress conditions. Interaction with Spx stabilizes Spx and exposes the C-terminus of Spx for recognition and proteolysis by ClpXP. In Staphylococcus haemolyticus (strain JCSC1435), this protein is ClpXP adapter protein SpxH.